The following is an 862-amino-acid chain: Putative PIP5K1A and PSMD4-like protein (862 aa).

Positions 28–396 (TSSALKGAIQ…WFQRFMCNTV (369 aa)) constitute a PIPK domain. Disordered stretches follow at residues 404–424 (PSPS…GSSG) and 453–481 (HLGC…PSFS). A compositionally biased stretch (low complexity) spans 412–424 (SGSSFSQRAGSSG). In terms of domain architecture, VWFA spans 490-673 (MLTTSVDNSE…LADALISFPI (184 aa)). The region spanning 696–715 (SADPELALVLRVFMEEQRQR) is the UIM 1 domain. The interval 716–740 (QEEEARQAAAASAAEAGIATTGTED) is disordered. The segment covering 722-731 (QAAAASAAEA) has biased composition (low complexity). The 18-residue stretch at 766 to 783 (MTEEEKIVCAMQMSLQGA) folds into the UIM 2 domain. The interval 826–862 (NLPGVDPNNEAIRNAVGSLASQATKDSKKDKKEEDKK) is disordered. The segment covering 850–862 (KDSKKDKKEEDKK) has biased composition (basic and acidic residues).

Testis-specific.

Its subcellular location is the cytoplasm. In terms of biological role, has negligible PIP5 kinase activity. Binds to ubiquitinated proteins. The protein is Putative PIP5K1A and PSMD4-like protein (PIPSL) of Homo sapiens (Human).